The primary structure comprises 134 residues: ATP synthase epsilon chain (134 aa).

Belongs to the ATPase epsilon chain family. F-type ATPases have 2 components, CF(1) - the catalytic core - and CF(0) - the membrane proton channel. CF(1) has five subunits: alpha(3), beta(3), gamma(1), delta(1), epsilon(1). CF(0) has three main subunits: a, b and c.

The protein resides in the cell membrane. Its function is as follows. Produces ATP from ADP in the presence of a proton gradient across the membrane. The sequence is that of ATP synthase epsilon chain from Clostridium botulinum (strain Alaska E43 / Type E3).